The following is a 98-amino-acid chain: Large ribosomal subunit protein uL23 (98 aa).

The protein belongs to the universal ribosomal protein uL23 family. Part of the 50S ribosomal subunit. Contacts protein L29, and trigger factor when it is bound to the ribosome.

One of the early assembly proteins it binds 23S rRNA. One of the proteins that surrounds the polypeptide exit tunnel on the outside of the ribosome. Forms the main docking site for trigger factor binding to the ribosome. This is Large ribosomal subunit protein uL23 from Rickettsia prowazekii (strain Madrid E).